A 329-amino-acid chain; its full sequence is HTH-type transcriptional regulator ArgR (329 aa).

The HTH araC/xylS-type domain occupies 214 to 312 (TQAVLLMEAN…GVTPREDRNQ (99 aa)). 2 consecutive DNA-binding regions (H-T-H motif) follow at residues 231–252 (DEIA…KQYL) and 279–302 (IIQI…RNFF). Positions 307–329 (REDRNQRRGGSAFETTFTPVERG) are disordered. Over residues 319 to 329 (FETTFTPVERG) the composition is skewed to polar residues.

Functionally, argR could be a transcriptional activator of the dauBAR operon in response to the presence of L-Arg. The polypeptide is HTH-type transcriptional regulator ArgR (argR) (Pseudomonas aeruginosa (strain ATCC 15692 / DSM 22644 / CIP 104116 / JCM 14847 / LMG 12228 / 1C / PRS 101 / PAO1)).